The following is a 132-amino-acid chain: Small ribosomal subunit protein uS8 (132 aa).

Belongs to the universal ribosomal protein uS8 family. In terms of assembly, part of the 30S ribosomal subunit. Contacts proteins S5 and S12.

In terms of biological role, one of the primary rRNA binding proteins, it binds directly to 16S rRNA central domain where it helps coordinate assembly of the platform of the 30S subunit. This is Small ribosomal subunit protein uS8 from Chelativorans sp. (strain BNC1).